The following is a 520-amino-acid chain: Laccase (520 aa).

Residues 1–21 (MHTFLRSTALVVAGLSARALA) form the signal peptide. Plastocyanin-like domains are found at residues 22–148 (SIGP…FVVY) and 160–304 (VDDD…ILRY). The N-linked (GlcNAc...) asparagine glycan is linked to Asn-75. 4 residues coordinate Cu cation: His-85, His-87, His-130, and His-132. Cystine bridges form between Cys-106–Cys-509 and Cys-138–Cys-227. N-linked (GlcNAc...) asparagine glycans are attached at residues Asn-352 and Asn-402. Residues 373-496 (TVPVLLQILS…VFAEDIPDVA (124 aa)) enclose the Plastocyanin-like 3 domain. Residues His-418, His-421, His-423, His-473, Cys-474, His-475, and His-479 each coordinate Cu cation.

The protein belongs to the multicopper oxidase family. Cu cation serves as cofactor.

Its subcellular location is the secreted. It carries out the reaction 4 hydroquinone + O2 = 4 benzosemiquinone + 2 H2O. Its function is as follows. Lignin degradation and detoxification of lignin-derived products. This Phlebia radiata (White-rot fungus) protein is Laccase (LAC).